Here is a 1235-residue protein sequence, read N- to C-terminus: Myosin-1 (1235 aa).

Residues 1–34 are disordered; that stretch reads MGITKRSKDKAARAERSAGGDKSSSAKPKKATFD. Over residues 9–19 the composition is skewed to basic and acidic residues; the sequence is DKAARAERSAG. Residues 41–715 form the Myosin motor domain; it reads IGVSDLTLLS…TLFALEHMRD (675 aa). 134–141 provides a ligand contact to ATP; that stretch reads GESGAGKT. Positions 405–487 are actin-binding; it reads SIGILDIYGF…PGIFSAMKDA (83 aa). IQ domains lie at 719–739 and 740–765; these read HNMA…RAEA and AIRI…EGHK. Positions 773-962 constitute a TH1 domain; the sequence is RRRMSILGSR…TVHTQPGEPP (190 aa). Disordered stretches follow at residues 949–1076 and 1135–1235; these read YKSS…AAKP and APPV…EDDW. The span at 982-1046 shows a compositional bias: low complexity; that stretch reads KGKLIKPGGP…PGAAATPAAA (65 aa). The span at 1050-1062 shows a compositional bias: polar residues; it reads PSHTRQQSSTSTV. A compositionally biased stretch (pro residues) spans 1063 to 1073; it reads RPPPPPPPAPA. The SH3 domain occupies 1075 to 1134; the sequence is KPKIMAKVLYDFAGTRENELSIKAGDMIEIVQKENNGWWLAKTPEGQAWVPAAYVEEQAP. A compositionally biased stretch (pro residues) spans 1135–1150; sequence APPVVAPRPPPPPPPA. The segment covering 1180-1210 has biased composition (polar residues); that stretch reads SLQNRDSGMSLNGANGSGSDASRSSTPTPSI.

This sequence belongs to the TRAFAC class myosin-kinesin ATPase superfamily. Myosin family.

The protein resides in the cytoplasm. It localises to the cytoskeleton. Its subcellular location is the actin patch. Type-I myosin implicated in the organization of the actin cytoskeleton. Required for proper actin cytoskeleton polarization. At the cell cortex, assembles in patch-like structures together with proteins from the actin-polymerizing machinery and promotes actin assembly. Functions as actin nucleation-promoting factor (NPF) for the Arp2/3 complex. This is Myosin-1 (myo-1) from Neurospora crassa (strain ATCC 24698 / 74-OR23-1A / CBS 708.71 / DSM 1257 / FGSC 987).